The primary structure comprises 191 residues: Probable DNA-directed RNA polymerase subunit delta (191 aa).

The HTH HARE-type domain occupies Leu-14–Trp-83. Residues Asp-118 to Leu-191 form a disordered region.

This sequence belongs to the RpoE family. RNAP is composed of a core of 2 alpha, a beta and a beta' subunits. The core is associated with a delta subunit and one of several sigma factors.

Participates in both the initiation and recycling phases of transcription. In the presence of the delta subunit, RNAP displays an increased specificity of transcription, a decreased affinity for nucleic acids, and an increased efficiency of RNA synthesis because of enhanced recycling. In Streptococcus pyogenes serotype M18 (strain MGAS8232), this protein is Probable DNA-directed RNA polymerase subunit delta.